A 377-amino-acid chain; its full sequence is Glutamate 5-kinase (377 aa).

An ATP-binding site is contributed by Lys-22. 3 residues coordinate substrate: Ser-62, Asp-149, and Asn-161. ATP contacts are provided by residues 181 to 182 and 223 to 229; these read TD and TGGMVTK. In terms of domain architecture, PUA spans 285-359; sequence QGTLVADSGA…GRNTAQLKRF (75 aa).

It belongs to the glutamate 5-kinase family.

It localises to the cytoplasm. It carries out the reaction L-glutamate + ATP = L-glutamyl 5-phosphate + ADP. The protein operates within amino-acid biosynthesis; L-proline biosynthesis; L-glutamate 5-semialdehyde from L-glutamate: step 1/2. Its function is as follows. Catalyzes the transfer of a phosphate group to glutamate to form L-glutamate 5-phosphate. The chain is Glutamate 5-kinase from Bifidobacterium adolescentis (strain ATCC 15703 / DSM 20083 / NCTC 11814 / E194a).